The sequence spans 126 residues: Small ribosomal subunit protein uS12c (126 aa).

Belongs to the universal ribosomal protein uS12 family. In terms of assembly, part of the 30S ribosomal subunit.

It is found in the plastid. Its subcellular location is the chloroplast. Functionally, with S4 and S5 plays an important role in translational accuracy. Located at the interface of the 30S and 50S subunits. In Trieres chinensis (Marine centric diatom), this protein is Small ribosomal subunit protein uS12c (rps12).